We begin with the raw amino-acid sequence, 307 residues long: Malonyl-[acyl-carrier protein] O-methyltransferase (307 aa).

This sequence belongs to the methyltransferase superfamily.

It carries out the reaction malonyl-[ACP] + S-adenosyl-L-methionine = malonyl-[ACP] methyl ester + S-adenosyl-L-homocysteine. The protein operates within cofactor biosynthesis; biotin biosynthesis. In terms of biological role, converts the free carboxyl group of a malonyl-thioester to its methyl ester by transfer of a methyl group from S-adenosyl-L-methionine (SAM). It allows to synthesize pimeloyl-ACP via the fatty acid synthetic pathway. This Nitrosospira multiformis (strain ATCC 25196 / NCIMB 11849 / C 71) protein is Malonyl-[acyl-carrier protein] O-methyltransferase.